Reading from the N-terminus, the 238-residue chain is Ubiquinone biosynthesis O-methyltransferase (238 aa).

Residues R40, G59, D80, and M124 each contribute to the S-adenosyl-L-methionine site.

It belongs to the methyltransferase superfamily. UbiG/COQ3 family.

The catalysed reaction is a 3-demethylubiquinol + S-adenosyl-L-methionine = a ubiquinol + S-adenosyl-L-homocysteine + H(+). It catalyses the reaction a 3-(all-trans-polyprenyl)benzene-1,2-diol + S-adenosyl-L-methionine = a 2-methoxy-6-(all-trans-polyprenyl)phenol + S-adenosyl-L-homocysteine + H(+). It participates in cofactor biosynthesis; ubiquinone biosynthesis. Functionally, O-methyltransferase that catalyzes the 2 O-methylation steps in the ubiquinone biosynthetic pathway. The protein is Ubiquinone biosynthesis O-methyltransferase of Ralstonia nicotianae (strain ATCC BAA-1114 / GMI1000) (Ralstonia solanacearum).